Reading from the N-terminus, the 51-residue chain is MGDVPLKIDSEKDFMKFFSTAPVIALVFFTLTAGFLVELNRFFPDILFFPY.

The chain crosses the membrane as a helical span at residues 17–37 (FFSTAPVIALVFFTLTAGFLV).

It belongs to the PsaJ family.

It is found in the cellular thylakoid membrane. May help in the organization of the PsaE and PsaF subunits. This is Photosystem I reaction center subunit IX from Acaryochloris marina (strain MBIC 11017).